We begin with the raw amino-acid sequence, 465 residues long: E3 ubiquitin-protein ligase ORTHRUS-LIKE 1 (465 aa).

Residues 31–69 (TSLSSPLDRSGDVDPLPVSDESGGSKADESMTDADETKK) are disordered. The RING-type zinc finger occupies 109–148 (CSLCNQLPDRPVTILCGHNFCLKCFDKWIDQGNQICATCR). Residues 233 to 374 (VRNQGVLVGE…FKVCRYLFVR (142 aa)) form the YDG domain. The helical transmembrane segment at 442–462 (MAMTCLLLFVLIILVGSSSIL) threads the bilayer.

Its subcellular location is the nucleus. The protein localises to the membrane. The catalysed reaction is S-ubiquitinyl-[E2 ubiquitin-conjugating enzyme]-L-cysteine + [acceptor protein]-L-lysine = [E2 ubiquitin-conjugating enzyme]-L-cysteine + N(6)-ubiquitinyl-[acceptor protein]-L-lysine.. It functions in the pathway protein modification; protein ubiquitination. Functionally, E3 ubiquitin-protein ligase. May participate in methylation-dependent transcriptional regulation. Mediates ubiquitination with the E2 ubiquitin-conjugating enzyme UBC11. In Arabidopsis thaliana (Mouse-ear cress), this protein is E3 ubiquitin-protein ligase ORTHRUS-LIKE 1 (ORTHL).